The primary structure comprises 138 residues: ATP synthase epsilon chain (138 aa).

This sequence belongs to the ATPase epsilon chain family. As to quaternary structure, F-type ATPases have 2 components, CF(1) - the catalytic core - and CF(0) - the membrane proton channel. CF(1) has five subunits: alpha(3), beta(3), gamma(1), delta(1), epsilon(1). CF(0) has three main subunits: a, b and c.

The protein localises to the cell inner membrane. Produces ATP from ADP in the presence of a proton gradient across the membrane. This Cupriavidus necator (strain ATCC 17699 / DSM 428 / KCTC 22496 / NCIMB 10442 / H16 / Stanier 337) (Ralstonia eutropha) protein is ATP synthase epsilon chain.